A 352-amino-acid chain; its full sequence is 4-hydroxy-2-oxovalerate aldolase (352 aa).

The Pyruvate carboxyltransferase domain occupies 13-265 (VRLTDTSLRD…KTGIDFFDIA (253 aa)). 21–22 (RD) provides a ligand contact to substrate. D22 lines the Mn(2+) pocket. H25 serves as the catalytic Proton acceptor. Substrate is bound by residues S175 and H204. Residues H204 and H206 each contribute to the Mn(2+) site. Residue Y295 participates in substrate binding.

This sequence belongs to the 4-hydroxy-2-oxovalerate aldolase family.

The enzyme catalyses (S)-4-hydroxy-2-oxopentanoate = acetaldehyde + pyruvate. In Mycobacterium avium (strain 104), this protein is 4-hydroxy-2-oxovalerate aldolase.